Reading from the N-terminus, the 156-residue chain is Small ribosomal subunit protein uS10m (156 aa).

The protein belongs to the universal ribosomal protein uS10 family.

It localises to the mitochondrion. Functionally, ribosomal protein required for normal mitochondrial function and normal larval development. Thought to have a role in insulin/IGF signaling. This Caenorhabditis elegans protein is Small ribosomal subunit protein uS10m (mrps-10).